Here is a 428-residue protein sequence, read N- to C-terminus: C4-dicarboxylate transport protein (428 aa).

The next 9 helical transmembrane spans lie at 4–24 (SLFK…ILLG), 44–64 (LIKM…IAGM), 76–96 (VALL…LIIV), 142–162 (IGAF…MFGF), 184–204 (VIFG…FGAM), 222–242 (LIVC…GSIA), 289–309 (VVGL…SIYL), 326–346 (IFHQ…AAGV), and 352–372 (IVLA…LALI).

The protein belongs to the dicarboxylate/amino acid:cation symporter (DAACS) (TC 2.A.23) family.

The protein localises to the cell inner membrane. Functionally, responsible for the transport of dicarboxylates such as succinate, fumarate, and malate from the periplasm across the membrane. This is C4-dicarboxylate transport protein from Citrobacter koseri (strain ATCC BAA-895 / CDC 4225-83 / SGSC4696).